The primary structure comprises 178 residues: Mediator of RNA polymerase II transcription subunit 30 (178 aa).

The disordered stretch occupies residues 1 to 22 (MSTPPLAPTGMASGPFGGPQAQ). Ser-2 is subject to N-acetylserine. Residues 134-173 (FASEERREIVEVNKKLKQKNQQLKQIMDQLRNLIWDINAM) adopt a coiled-coil conformation.

This sequence belongs to the Mediator complex subunit 30 family. As to quaternary structure, component of the Mediator complex, which is composed of MED1, MED4, MED6, MED7, MED8, MED9, MED10, MED11, MED12, MED13, MED13L, MED14, MED15, MED16, MED17, MED18, MED19, MED20, MED21, MED22, MED23, MED24, MED25, MED26, MED27, MED29, MED30, MED31, CCNC, CDK8 and CDC2L6/CDK11. The MED12, MED13, CCNC and CDK8 subunits form a distinct module termed the CDK8 module. Mediator containing the CDK8 module is less active than Mediator lacking this module in supporting transcriptional activation. Individual preparations of the Mediator complex lacking one or more distinct subunits have been variously termed ARC, CRSP, DRIP, PC2, SMCC and TRAP.

It localises to the nucleus. Functionally, component of the Mediator complex, a coactivator involved in the regulated transcription of nearly all RNA polymerase II-dependent genes. Mediator functions as a bridge to convey information from gene-specific regulatory proteins to the basal RNA polymerase II transcription machinery. Mediator is recruited to promoters by direct interactions with regulatory proteins and serves as a scaffold for the assembly of a functional preinitiation complex with RNA polymerase II and the general transcription factors. This Mus musculus (Mouse) protein is Mediator of RNA polymerase II transcription subunit 30 (Med30).